The chain runs to 79 residues: uncharacterized protein (79 aa).

The first 20 residues, 1-20 (MSQLMGIITRLQSLQETAEA), serve as a signal peptide directing secretion.

This is an uncharacterized protein from Bacillus subtilis (strain 168).